The primary structure comprises 64 residues: Prokaryotic ubiquitin-like protein Pup (64 aa).

The tract at residues 1–37 (MAQEQTKRGGGGGEDDDLTGSTAAGQERREKLTDETD) is disordered. The tract at residues 21-58 (STAAGQERREKLTDETDDLLDEIDDVLEENAEDFVRAY) is ARC ATPase binding. A coiled-coil region spans residues 23 to 52 (AAGQERREKLTDETDDLLDEIDDVLEENAE). A Deamidated glutamine modification is found at Gln64. Gln64 is covalently cross-linked (Isoglutamyl lysine isopeptide (Gln-Lys) (interchain with K-? in acceptor proteins)).

Belongs to the prokaryotic ubiquitin-like protein family. Strongly interacts with the proteasome-associated ATPase ARC through a hydrophobic interface; the interacting region of Pup lies in its C-terminal half. There is one Pup binding site per ARC hexamer ring. Post-translationally, is modified by deamidation of its C-terminal glutamine to glutamate by the deamidase Dop, a prerequisite to the subsequent pupylation process.

The protein operates within protein degradation; proteasomal Pup-dependent pathway. Functionally, protein modifier that is covalently attached to lysine residues of substrate proteins, thereby targeting them for proteasomal degradation. The tagging system is termed pupylation. The chain is Prokaryotic ubiquitin-like protein Pup from Mycolicibacterium vanbaalenii (strain DSM 7251 / JCM 13017 / BCRC 16820 / KCTC 9966 / NRRL B-24157 / PYR-1) (Mycobacterium vanbaalenii).